Here is a 515-residue protein sequence, read N- to C-terminus: Histidine ammonia-lyase (515 aa).

The 5-imidazolinone (Ala-Gly) cross-link spans 142-144; sequence ASG. 2,3-didehydroalanine (Ser) is present on serine 143.

It belongs to the PAL/histidase family. Post-translationally, contains an active site 4-methylidene-imidazol-5-one (MIO), which is formed autocatalytically by cyclization and dehydration of residues Ala-Ser-Gly.

Its subcellular location is the cytoplasm. The catalysed reaction is L-histidine = trans-urocanate + NH4(+). It functions in the pathway amino-acid degradation; L-histidine degradation into L-glutamate; N-formimidoyl-L-glutamate from L-histidine: step 1/3. The sequence is that of Histidine ammonia-lyase from Bradyrhizobium sp. (strain ORS 278).